Reading from the N-terminus, the 279-residue chain is Large ribosomal subunit protein uL2 (279 aa).

Disordered stretches follow at residues 32–58 (SLLT…GGGH) and 223–279 (GVAM…RKRG). 2 stretches are compositionally biased toward basic residues: residues 40–58 (KGGR…GGGH) and 269–279 (VRRRYATRKRG).

This sequence belongs to the universal ribosomal protein uL2 family. In terms of assembly, part of the 50S ribosomal subunit. Forms a bridge to the 30S subunit in the 70S ribosome.

In terms of biological role, one of the primary rRNA binding proteins. Required for association of the 30S and 50S subunits to form the 70S ribosome, for tRNA binding and peptide bond formation. It has been suggested to have peptidyltransferase activity; this is somewhat controversial. Makes several contacts with the 16S rRNA in the 70S ribosome. The polypeptide is Large ribosomal subunit protein uL2 (Salinispora tropica (strain ATCC BAA-916 / DSM 44818 / JCM 13857 / NBRC 105044 / CNB-440)).